A 479-amino-acid polypeptide reads, in one-letter code: Phosphatidylinositol 4-kinase type 2-beta (479 aa).

A compositionally biased stretch (acidic residues) spans 1–10 (MESGSEEPDE). The interval 1–91 (MESGSEEPDE…PRVGAGHTGH (91 aa)) is disordered. Residues 18–34 (PALHAGPPAGRAAPGGA) show a composition bias toward low complexity. A compositionally biased stretch (acidic residues) spans 42-62 (GLEEEEEGEEDSGPEGDGEEE). Residues 118-449 (GVLPERISQG…VQMPRVIVER (332 aa)) form the PI3K/PI4K catalytic domain. The interval 124-130 (ISQGSSG) is G-loop. ATP is bound by residues Ser131 and Lys146. Positions 151–153 (EPY) are important for substrate binding. Residues 159–172 (KWTKYFHKICCPCC) form an important for interaction with membranes region. Residues 255 to 258 (QLFV) and 269 to 270 (RK) each bind ATP. Positions 262-270 (KEADYWLRK) are important for interaction with membranes. Residues 299 to 307 (RNTDRGNDN) form a catalytic loop region. An activation loop region spans residues 340 to 360 (AIDNGLAFPFKHPDEWRAYPF). Position 342 (Asp342) interacts with ATP. The segment at 355-364 (WRAYPFHWAW) is important for interaction with membranes.

Belongs to the PI3/PI4-kinase family. Type II PI4K subfamily.

It localises to the cytoplasm. It is found in the cytosol. The protein resides in the golgi apparatus membrane. The protein localises to the endoplasmic reticulum membrane. Its subcellular location is the cell membrane. It localises to the early endosome membrane. It carries out the reaction a 1,2-diacyl-sn-glycero-3-phospho-(1D-myo-inositol) + ATP = a 1,2-diacyl-sn-glycero-3-phospho-(1D-myo-inositol 4-phosphate) + ADP + H(+). Contributes to the overall PI4-kinase activity of the cell. This contribution may be especially significant in plasma membrane, endosomal and Golgi compartments. The phosphorylation of phosphatidylinositol (PI) to PI4P is the first committed step in the generation of phosphatidylinositol 4,5-bisphosphate (PIP2), a precursor of the second messenger inositol 1,4,5-trisphosphate (InsP3). The protein is Phosphatidylinositol 4-kinase type 2-beta (PI4K2B) of Gallus gallus (Chicken).